Consider the following 969-residue polypeptide: Protein translocase subunit SecA (969 aa).

Residues Gln-99, 117-121 (GEGKT), and Asp-631 contribute to the ATP site.

This sequence belongs to the SecA family. As to quaternary structure, monomer and homodimer. Part of the essential Sec protein translocation apparatus which comprises SecA, SecYEG and auxiliary proteins SecDF. Other proteins may also be involved.

The protein resides in the cell inner membrane. The protein localises to the cytoplasm. The enzyme catalyses ATP + H2O + cellular proteinSide 1 = ADP + phosphate + cellular proteinSide 2.. Its function is as follows. Part of the Sec protein translocase complex. Interacts with the SecYEG preprotein conducting channel. Has a central role in coupling the hydrolysis of ATP to the transfer of proteins into and across the cell membrane, serving as an ATP-driven molecular motor driving the stepwise translocation of polypeptide chains across the membrane. In Chlamydia trachomatis serovar D (strain ATCC VR-885 / DSM 19411 / UW-3/Cx), this protein is Protein translocase subunit SecA.